An 82-amino-acid chain; its full sequence is Acyl carrier protein (82 aa).

The Carrier domain maps to 3–81 (LSREKVLESI…DAVDFIIAAK (79 aa)). Ser-41 carries the post-translational modification O-(pantetheine 4'-phosphoryl)serine.

It belongs to the acyl carrier protein (ACP) family. Post-translationally, 4'-phosphopantetheine is transferred from CoA to a specific serine of apo-ACP by AcpS. This modification is essential for activity because fatty acids are bound in thioester linkage to the sulfhydryl of the prosthetic group.

It is found in the cytoplasm. The protein operates within lipid metabolism; fatty acid biosynthesis. Functionally, carrier of the growing fatty acid chain in fatty acid biosynthesis. This chain is Acyl carrier protein, found in Tropheryma whipplei (strain Twist) (Whipple's bacillus).